A 777-amino-acid polypeptide reads, in one-letter code: Semaphorin-4F (777 aa).

Residues 1-40 (MLARAERPRPGPRPPPVSLFPPPSSLLLLLLAMLSAPVCG) form the signal peptide. Residues 41–667 (RVPRSVPRTS…PANRAHTVVG (627 aa)) lie on the Extracellular side of the membrane. The Sema domain maps to 48–516 (RTSLPISEAD…SHTEVTQVNT (469 aa)). N-linked (GlcNAc...) asparagine glycosylation is present at N70. A disulfide bridge connects residues C118 and C128. N139 is a glycosylation site (N-linked (GlcNAc...) asparagine). 3 cysteine pairs are disulfide-bonded: C146–C155, C279–C390, and C303–C349. An N-linked (GlcNAc...) asparagine glycan is attached at N515. The 52-residue stretch at 518–569 (NCGRLQSCSECILAQDPVCAWSFRLDACVAHAGEHRGMVQDIESADVSSLCP) folds into the PSI domain. 3 disulfides stabilise this stretch: C519-C536, C528-C545, and C593-C634. The Ig-like C2-type domain occupies 586 to 641 (VGHVVLPCSPSSAWASCVWHQPSGVTSLTPRRDGLEVVVTPGAMGAYACECQEGGA). The helical transmembrane segment at 668–688 (AGLVGFFLGVLAASLTLLLIG) threads the bilayer. Residues 689 to 777 (RRQQRRRQRE…PLATCDETSI (89 aa)) lie on the Cytoplasmic side of the membrane. The interval 703–742 (DKVGLDLGAPPSGTTSYSQDPPSPSPEDERLPLALGKRGS) is disordered. S725 and S727 each carry phosphoserine. The PDZ-binding motif lies at 775–777 (TSI).

Belongs to the semaphorin family. Interacts (via PDZ-binding motif) with DLG4/SAP90 (via PDZ domain 2); this interaction may promote translocation of DLG4/SAP90 to the membrane. As to expression, expressed throughout the adult brain, where it shows particularly strong expression in the hippocampus, corpus callosum, granular layer and deep nuclei of the cerebellum, and the mitral layer of the olfactory bulb (at protein level). At the cellular level, detected in neuronal precursors, postmitotic neurons, pyramidal neurons, and glial cells including mature oligodendocytes and oligodendroglial precursor cells (at protein level).

It is found in the cell membrane. The protein localises to the postsynaptic density. Its subcellular location is the perikaryon. The protein resides in the cell projection. It localises to the dendrite. In terms of biological role, probable cell surface receptor that regulates oligodendroglial precursor cell migration. Might also regulate differentiation of oligodendroglial precursor cells. Has growth cone collapse activity against retinal ganglion-cell axons. This is Semaphorin-4F (Sema4f) from Mus musculus (Mouse).